Reading from the N-terminus, the 301-residue chain is Tyrosine recombinase XerD (301 aa).

A Core-binding (CB) domain is found at 6–89 (PLHQQLIEQF…ALKVFFHFLK (84 aa)). The region spanning 108-293 (RLPSILSTEE…ASESIIEKFH (186 aa)) is the Tyr recombinase domain. Residues Arg-152, Lys-174, His-245, Arg-248, and His-271 contribute to the active site. Residue Tyr-280 is the O-(3'-phospho-DNA)-tyrosine intermediate of the active site.

It belongs to the 'phage' integrase family. XerD subfamily. Forms a cyclic heterotetrameric complex composed of two molecules of XerC and two molecules of XerD.

The protein resides in the cytoplasm. Site-specific tyrosine recombinase, which acts by catalyzing the cutting and rejoining of the recombining DNA molecules. The XerC-XerD complex is essential to convert dimers of the bacterial chromosome into monomers to permit their segregation at cell division. It also contributes to the segregational stability of plasmids. The sequence is that of Tyrosine recombinase XerD from Chlamydia muridarum (strain MoPn / Nigg).